The sequence spans 350 residues: Phenylalanine--tRNA ligase alpha subunit (350 aa).

Glutamate 260 contacts Mg(2+).

The protein belongs to the class-II aminoacyl-tRNA synthetase family. Phe-tRNA synthetase alpha subunit type 1 subfamily. As to quaternary structure, tetramer of two alpha and two beta subunits. Mg(2+) serves as cofactor.

The protein localises to the cytoplasm. It carries out the reaction tRNA(Phe) + L-phenylalanine + ATP = L-phenylalanyl-tRNA(Phe) + AMP + diphosphate + H(+). The sequence is that of Phenylalanine--tRNA ligase alpha subunit from Mycoplasma capricolum subsp. capricolum (strain California kid / ATCC 27343 / NCTC 10154).